A 128-amino-acid polypeptide reads, in one-letter code: Large ribosomal subunit protein bL12 (128 aa).

Belongs to the bacterial ribosomal protein bL12 family. As to quaternary structure, homodimer. Part of the ribosomal stalk of the 50S ribosomal subunit. Forms a multimeric L10(L12)X complex, where L10 forms an elongated spine to which 2 to 4 L12 dimers bind in a sequential fashion. Binds GTP-bound translation factors.

Forms part of the ribosomal stalk which helps the ribosome interact with GTP-bound translation factors. Is thus essential for accurate translation. The protein is Large ribosomal subunit protein bL12 of Brachyspira hyodysenteriae (strain ATCC 49526 / WA1).